The chain runs to 219 residues: uncharacterized protein (219 aa).

The interval 42 to 71 (RQPRVVPVTSSDPEVVDDEDDEDQSDDSDE) is disordered. A compositionally biased stretch (low complexity) spans 45 to 54 (RVVPVTSSDP). Acidic residues predominate over residues 55–71 (EVVDDEDDEDQSDDSDE).

This is an uncharacterized protein from Dryophytes versicolor (chameleon treefrog).